A 503-amino-acid chain; its full sequence is Maturase K (503 aa).

This sequence belongs to the intron maturase 2 family. MatK subfamily.

It is found in the plastid. The protein resides in the chloroplast. Usually encoded in the trnK tRNA gene intron. Probably assists in splicing its own and other chloroplast group II introns. The sequence is that of Maturase K from Aethionema cordifolium (Lebanon stonecress).